The sequence spans 861 residues: Bifunctional uridylyltransferase/uridylyl-removing enzyme (861 aa).

The segment at 1 to 321 (MKNDNRIIKN…VYHQKQKIIR (321 aa)) is uridylyltransferase. The tract at residues 322–678 (LDDEFQLSNR…IMPHHSQGGT (357 aa)) is uridylyl-removing. Residues 440–562 (VDQHTLFVIR…LPHARYLDYL (123 aa)) form the HD domain. 2 ACT domains span residues 679–760 (EVFI…AVSR) and 788–861 (QLFL…KSKY).

This sequence belongs to the GlnD family. The cofactor is Mg(2+).

The catalysed reaction is [protein-PII]-L-tyrosine + UTP = [protein-PII]-uridylyl-L-tyrosine + diphosphate. It catalyses the reaction [protein-PII]-uridylyl-L-tyrosine + H2O = [protein-PII]-L-tyrosine + UMP + H(+). With respect to regulation, uridylyltransferase (UTase) activity is inhibited by glutamine, while glutamine activates uridylyl-removing (UR) activity. Modifies, by uridylylation and deuridylylation, the PII regulatory proteins (GlnB and homologs), in response to the nitrogen status of the cell that GlnD senses through the glutamine level. Under low glutamine levels, catalyzes the conversion of the PII proteins and UTP to PII-UMP and PPi, while under higher glutamine levels, GlnD hydrolyzes PII-UMP to PII and UMP (deuridylylation). Thus, controls uridylylation state and activity of the PII proteins, and plays an important role in the regulation of nitrogen assimilation and metabolism. This is Bifunctional uridylyltransferase/uridylyl-removing enzyme from Legionella pneumophila (strain Corby).